Consider the following 465-residue polypeptide: Mothers against decapentaplegic homolog 1 (465 aa).

Residues 12–136 (PAVKRLLGWK…YKRVESPVLP (125 aa)) form the MH1 domain. Zn(2+)-binding residues include cysteine 64, cysteine 109, cysteine 121, and histidine 126. Residues 161 to 240 (QNEPHMPHNA…EDQMTHDTSQ (80 aa)) form a disordered region. The segment covering 179 to 210 (PNSHPFPHSPNSSYPNSPGSSSSTYPHSPASS) has biased composition (low complexity). The region spanning 271–465 (WCSIVYYELN…SPHNPISSVS (195 aa)) is the MH2 domain. Residues serine 463 and serine 465 each carry the phosphoserine modification.

This sequence belongs to the dwarfin/SMAD family. In terms of assembly, found in a complex with SMAD4 and YY1. Interacts with HGS, NANOG and ZCCHC12. Upon C-terminus phosphorylation: forms trimers with another SMAD1 and the co-SMAD SMAD4. Interacts with PEBP2-alpha subunit, CREB-binding protein (CBP), p300, SMURF1, SMURF2, USP15 and HOXC8. Associates with ZNF423 or ZNF521 in response to BMP2 leading to activate transcription of BMP target genes. Interacts with SKOR1. Interacts (via MH2 domain) with LEMD3. Binding to LEMD3 results in at least a partial reduction of receptor-mediated phosphorylation. Forms a ternary complex with PSMB4 and OAZ1 before PSMB4 is incorporated into the 20S proteasome. Found in a macromolecular complex with FAM83G. Interacts (via MH2 domain) with FAM83G (via MH2 domain); in a SMAD4-independent manner. Interacts with ZC3H3. Interacts with TMEM119. Interacts (via MH1 and MH2 domains) with ZNF8. Interacts with RANBP3L; the interaction increases when SMAD1 is not phosphorylated and mediates SMAD1 nuclear export. Interacts with EGR1; this interaction inhibits SMAD1 dephosphorylation. Interacts with SMAD6. Interacts with YAP1. Phosphorylation of the C-terminal SVS motif by BMP type 1 receptor kinase activates SMAD1 by promoting dissociation from the receptor and trimerization with SMAD4. Phosphorylation by ERK2 MAP kinase in response to EGF or HGF prevents SMAD1 nuclear accumulation and transcriptional activity in response to BMP. Dephosphorylation, probably by PPM1A, induces its export from the nucleus to the cytoplasm. Dephosphorylation is inhibited by association with EGR1. Phosphorylation by CDK8/9 creates binding sites for YAP1, and subsequent phosphorylation by GSK3 switches off YAP1 binding and adds binding sites for SMURF1. In terms of processing, ubiquitinated by SMAD-specific E3 ubiquitin ligase SMURF1, leading to its degradation. Monoubiquitinated, leading to prevent DNA-binding. Deubiquitination by USP15 alleviates inhibition and promotes activation of TGF-beta target genes. Dephosphorylation, probably by PPM1A, induces its export from the nucleus to the cytoplasm. Phospho-SMAD1 is ubiquitinated by CHIP leading to disruption of the SMAD1-SMAD4 complex.

It is found in the cytoplasm. The protein resides in the nucleus. Transcriptional modulator that plays a role in various cellular processes, including embryonic development, cell differentiation, and tissue homeostasis. Upon BMP ligand binding to their receptors at the cell surface, is phosphorylated by activated type I BMP receptors (BMPRIs) and associates with SMAD4 to form an heteromeric complex which translocates into the nucleus acting as transcription factor. In turn, the hetero-trimeric complex recognizes cis-regulatory elements containing Smad Binding Elements (SBEs) to modulate the outcome of the signaling network. SMAD1/OAZ1/PSMB4 complex mediates the degradation of the CREBBP/EP300 repressor SNIP1. The sequence is that of Mothers against decapentaplegic homolog 1 (SMAD1) from Coturnix japonica (Japanese quail).